Consider the following 503-residue polypeptide: Probable Xaa-Pro aminopeptidase TSTA_094700 (503 aa).

Mn(2+)-binding residues include D277, D288, E428, and E467.

The protein belongs to the peptidase M24B family. Requires Mn(2+) as cofactor.

It carries out the reaction Release of any N-terminal amino acid, including proline, that is linked to proline, even from a dipeptide or tripeptide.. Its function is as follows. Catalyzes the removal of a penultimate prolyl residue from the N-termini of peptides. The protein is Probable Xaa-Pro aminopeptidase TSTA_094700 of Talaromyces stipitatus (strain ATCC 10500 / CBS 375.48 / QM 6759 / NRRL 1006) (Penicillium stipitatum).